A 961-amino-acid polypeptide reads, in one-letter code: SH3 domain-binding protein 4 (961 aa).

The SH3 1 domain occupies 55-114; it reads GNAKEVIAIKDYCPNNFTTLKFSKGDHLYVLDTSGGEWWYAHNTTEMGYIPSSYVQPLNY. Phosphoserine is present on residues Ser-131, Ser-244, Ser-249, Ser-277, and Ser-294. Positions 315–452 constitute a ZU5 domain; sequence TNIVCKLDSS…LEPCMYLAIV (138 aa). The residue at position 635 (Ser-635) is a Phosphoserine. Residues 652 to 722 enclose the SH3 2 domain; that stretch reads SSLKFGKLLK…HTKNVLVVGK (71 aa).

Homodimer or homooligomer. Interacts with DNM2, EPS15, clathrin, the adapter protein complex 2/AP-2 and TFRC. Interacts with the Rag GTPases RRAGA, RRAGB, RRAGC and RRAGD; the interaction is most probably direct, preferentially occurs with their inactive GDP-bound form and is negatively regulated by amino acids. Phosphorylated upon EGF stimulation. Phosphorylation prevents interaction with DNM2.

Its subcellular location is the membrane. It is found in the clathrin-coated pit. The protein localises to the cytoplasmic vesicle. It localises to the clathrin-coated vesicle. The protein resides in the nucleus. In terms of biological role, may function in transferrin receptor internalization at the plasma membrane through a cargo-specific control of clathrin-mediated endocytosis. Alternatively, may act as a negative regulator of the amino acid-induced TOR signaling by inhibiting the formation of active Rag GTPase complexes. Preferentially binds inactive Rag GTPase complexes and prevents their interaction with the mTORC1 complex inhibiting its relocalization to lysosomes and its activation. Thereby, may indirectly regulate cell growth, proliferation and autophagy. The polypeptide is SH3 domain-binding protein 4 (Sh3bp4) (Rattus norvegicus (Rat)).